An 80-amino-acid chain; its full sequence is Protein UL148B (80 aa).

The chain crosses the membrane as a helical span at residues Ala-10–Phe-30.

The protein resides in the host membrane. This is Protein UL148B (UL148B) from Homo sapiens (Human).